The primary structure comprises 233 residues: Ion-translocating oxidoreductase complex subunit E (233 aa).

Transmembrane regions (helical) follow at residues 18–38 (ALVQ…ATNA), 39–59 (LGLG…VSAL), 69–89 (IPIY…LINA), 92–112 (FGLY…CIVI), 128–148 (ALDG…LGAL), and 182–202 (PFLL…LLAG).

The protein belongs to the NqrDE/RnfAE family. As to quaternary structure, the complex is composed of six subunits: RnfA, RnfB, RnfC, RnfD, RnfE and RnfG.

It is found in the cell inner membrane. In terms of biological role, part of a membrane-bound complex that couples electron transfer with translocation of ions across the membrane. The protein is Ion-translocating oxidoreductase complex subunit E of Yersinia pseudotuberculosis serotype O:1b (strain IP 31758).